A 234-amino-acid polypeptide reads, in one-letter code: Sugar fermentation stimulation protein A (234 aa).

Residues 201–220 (LLSEAQQRGVEILAYKAEIS) constitute a DNA-binding region (H-T-H motif).

Belongs to the SfsA family.

Its function is as follows. Binds to DNA non-specifically. Could be a regulatory factor involved in maltose metabolism. The sequence is that of Sugar fermentation stimulation protein A from Shigella flexneri.